A 63-amino-acid chain; its full sequence is Sec-independent protein translocase protein TatA (63 aa).

Residues 1–21 (MGSFSMWHWLIVLVIVLLLFG) form a helical membrane-spanning segment. The segment at 42–63 (GMTDEDAPDTAKTVDHKADETK) is disordered. Positions 53–63 (KTVDHKADETK) are enriched in basic and acidic residues.

The protein belongs to the TatA/E family. As to quaternary structure, the Tat system comprises two distinct complexes: a TatABC complex, containing multiple copies of TatA, TatB and TatC subunits, and a separate TatA complex, containing only TatA subunits. Substrates initially bind to the TatABC complex, which probably triggers association of the separate TatA complex to form the active translocon.

It localises to the cell inner membrane. Its function is as follows. Part of the twin-arginine translocation (Tat) system that transports large folded proteins containing a characteristic twin-arginine motif in their signal peptide across membranes. TatA could form the protein-conducting channel of the Tat system. The protein is Sec-independent protein translocase protein TatA of Rhizobium leguminosarum bv. trifolii (strain WSM2304).